Reading from the N-terminus, the 527-residue chain is Ankyrin repeat domain-containing protein 42 (527 aa).

The disordered stretch occupies residues 1 to 27 (MPGVANPGPSKSRRETADSSSRKKVHF). Residues 12 to 21 (SRRETADSSS) are compositionally biased toward basic and acidic residues. 10 ANK repeats span residues 25 to 54 (VHFS…NLNE), 59 to 88 (HQFT…DATQ), 92 to 121 (RGWT…NLAT), 125 to 154 (RGCT…DPSV), 158 to 187 (REWK…GIED), 191 to 220 (NGNL…SATQ), 228 to 257 (NGEN…EGSH), 263 to 293 (DLAF…NLNE), 297 to 326 (NGST…ESNI), and 330 to 360 (AGET…EIDD). Residues 395 to 484 (NARMRAHKKI…ETLQKIQVTS (90 aa)) are a coiled coil.

This is Ankyrin repeat domain-containing protein 42 (Ankrd42) from Mus musculus (Mouse).